Consider the following 278-residue polypeptide: Large ribosomal subunit protein uL2 (278 aa).

Disordered stretches follow at residues 29 to 53 and 223 to 278; these read PEKS…TTRH and GVAM…GKKR. The segment covering 255–268 has biased composition (basic and acidic residues); it reads GRTRRPGKESDKLI. Residues 269-278 are compositionally biased toward basic residues; sequence VRRRRTGKKR.

The protein belongs to the universal ribosomal protein uL2 family. As to quaternary structure, part of the 50S ribosomal subunit. Forms a bridge to the 30S subunit in the 70S ribosome.

In terms of biological role, one of the primary rRNA binding proteins. Required for association of the 30S and 50S subunits to form the 70S ribosome, for tRNA binding and peptide bond formation. It has been suggested to have peptidyltransferase activity; this is somewhat controversial. Makes several contacts with the 16S rRNA in the 70S ribosome. In Kineococcus radiotolerans (strain ATCC BAA-149 / DSM 14245 / SRS30216), this protein is Large ribosomal subunit protein uL2.